We begin with the raw amino-acid sequence, 64 residues long: MHCLPVLVILLLLIASTPSVDARPKTKDDVPPASFHGADDANRILQTLWNLRGCCEDKTCCFIG.

The signal sequence occupies residues 1 to 22 (MHCLPVLVILLLLIASTPSVDA). Residues 23–52 (RPKTKDDVPPASFHGADDANRILQTLWNLR) constitute a propeptide that is removed on maturation. Ile-63 carries the post-translational modification Isoleucine amide.

It belongs to the conotoxin T superfamily. Post-translationally, contains 2 disulfide bonds that can be either 'C1-C3, C2-C4' or 'C1-C4, C2-C3', since these disulfide connectivities have been observed for conotoxins with cysteine framework V (for examples, see AC P0DQQ7 and AC P81755). As to expression, expressed by the venom duct.

Its subcellular location is the secreted. In Conus tessulatus (Tessellate cone), this protein is Conotoxin Ts-011.